We begin with the raw amino-acid sequence, 201 residues long: uncharacterized protein (201 aa).

Residues 1-22 are disordered; the sequence is MAASKAAKSSEDRAGGGGGGGG.

This is an uncharacterized protein from Tomato ringspot virus (isolate raspberry) (ToRSV).